Here is a 349-residue protein sequence, read N- to C-terminus: Small ribosomal subunit biogenesis GTPase RsgA (349 aa).

The disordered stretch occupies residues 1–38 (MSKNKLSKGQERRVQANHQRRLKRTDNKPELDDSQLGE). Residues 102-272 (TSVLNRPDIY…VIDSPGVREF (171 aa)) enclose the CP-type G domain. Residues 158–161 (NKID) and 212–220 (GQSGVGKSS) each bind GTP. The Zn(2+) site is built by C296, C301, H303, and C309.

The protein belongs to the TRAFAC class YlqF/YawG GTPase family. RsgA subfamily. Monomer. Associates with 30S ribosomal subunit, binds 16S rRNA. It depends on Zn(2+) as a cofactor.

The protein resides in the cytoplasm. In terms of biological role, one of several proteins that assist in the late maturation steps of the functional core of the 30S ribosomal subunit. Helps release RbfA from mature subunits. May play a role in the assembly of ribosomal proteins into the subunit. Circularly permuted GTPase that catalyzes slow GTP hydrolysis, GTPase activity is stimulated by the 30S ribosomal subunit. The chain is Small ribosomal subunit biogenesis GTPase RsgA from Serratia proteamaculans (strain 568).